The primary structure comprises 244 residues: MSAAAYMDFVAAQCLVSISNRAAVPEHGGAPDAERLRLPEREVTKEHGDPGDTWKDYCTLVTIAKSLLDLNKYRPIQTPSVCSDSLESPDEDIGSDSDVTTESGSSPSHSPEERQDSGSAPSPLSLLHSGVASKGKHASEKRHKCPYSGCGKVYGKSSHLKAHYRVHTGERPFPCTWPDCLKKFSRSDELTRHYRTHTGEKQFRCPLCEKRFMRSDHLTKHARRHTDFHPSMIKRSKKALASPL.

Disordered regions lie at residues 24-51 (VPEH…GDPG) and 79-143 (PSVC…EKRH). A compositionally biased stretch (basic and acidic residues) spans 32–51 (DAERLRLPEREVTKEHGDPG). The residue at position 122 (Ser-122) is a Phosphoserine. Residues 134 to 143 (KGKHASEKRH) show a composition bias toward basic residues. 3 C2H2-type zinc fingers span residues 143–167 (HKCP…YRVH), 173–197 (FPCT…YRTH), and 203–225 (FRCP…ARRH).

This sequence belongs to the Sp1 C2H2-type zinc-finger protein family. In terms of assembly, interacts with ZZEF1.

It is found in the nucleus. In terms of biological role, transcription factor that binds to GC box promoter elements. Selectively activates mRNA synthesis from genes containing tandem repeats of GC boxes but represses genes with a single GC box. Acts as an epidermal circadian transcription factor regulating keratinocyte proliferation. This chain is Krueppel-like factor 9 (Klf9), found in Rattus norvegicus (Rat).